The primary structure comprises 228 residues: Lipoprotein LpqN (228 aa).

An N-terminal signal peptide occupies residues 1 to 19 (MKHFTAAVATVALSLALAG). A lipid anchor (N-palmitoyl cysteine) is attached at C20. A lipid anchor (S-diacylglycerol cysteine) is attached at C20. Positions 26–53 (TDSAPTTSPTTTSPTTSTTTTSATTSAQ) are disordered. The segment covering 28–52 (SAPTTSPTTTSPTTSTTTTSATTSA) has biased composition (low complexity).

In terms of assembly, interacts with the periplasmic loop domains of the mycolate transporters MmpL3 and MmpL11. Also interacts with secreted cell envelope biosynthetic enzymes such as Ag85A. These interactions are weak and may require a putative mycobacterial adapter protein or molecule. Interacts with human ubiquitin ligase CBL.

It is found in the cell membrane. Its subcellular location is the secreted. In terms of biological role, involved in cell envelope biogenesis. May act as a membrane fusion protein, connecting MmpL transporters with periplasmic proteins, and play a role in cell envelope lipid changes during biofilm maturation. Is also a virulence factor required for intracellular survival. Associates with CBL, a host ubiquitin ligase, and probably blocks the normal functions of CBL and disturbs CBL-mediated antibacterial activity. Interaction counteracts antibacterial defense but causes a reciprocal enhancement of antiviral defense. The sequence is that of Lipoprotein LpqN from Mycobacterium tuberculosis (strain ATCC 25618 / H37Rv).